Here is a 1657-residue protein sequence, read N- to C-terminus: Ras GTPase-activating-like protein IQGAP1 (1657 aa).

Residue Ser2 is modified to N-acetylserine. Phosphoserine is present on Ser2. A Calponin-homology (CH) domain is found at 44–159 (LCHLEEAKRW…YCIHALSLYL (116 aa)). Tyr172 carries the phosphotyrosine modification. Ser330 is subject to Phosphoserine. A WW domain is found at 685–710 (WVKHWVKGGYHYYHNLETQAGGWAEP). IQ domains lie at 745-774 (NEGLITKLQACCRGYLVRQEFRSRMNFLKK), 775-804 (QIPAITCIQSQWRGYKQKKAYQDRLAYLHS), 805-834 (HKDEVVKIQSLARMHQARKRYRDRLQYFRD), and 835-864 (HINDIIKIQAFIRANKARDDYKTLINAEDP). Positions 956-1274 (GGLKALSKEK…FFQVACDVPE (319 aa)) are C1. Residues 1020-1269 (YLLLRLFQTA…QKFRRFFQVA (250 aa)) form the Ras-GAP domain. The segment at 1276–1657 (QDKFNVDEYS…FLLNKKFYGK (382 aa)) is C2. Position 1441 is a phosphoserine (Ser1441).

In terms of assembly, interacts with CDC42; the interaction is demonstrated with IQGAP1 in GTP-bound and in nucleotide-free state. Interacts with RAC1. Does not interact with RHOA. Interacts with TSG101. Interacts with PAK6. Interacts with SASH1. Interacts with PJVK. Interacts with SLC26A4. This interaction enhances the chloride-bicarbonate exchange activity of SLC26A4. Interacts with SVEP1. Interacts with ILK; the interaction is required for localization of IQGAP to the cell cortex. As to quaternary structure, (Microbial infection) In case of infection, interacts with S.typhimurium protein sseI. Expressed in the kidney (at protein level).

It localises to the cell membrane. Its subcellular location is the nucleus. The protein resides in the cytoplasm. It is found in the cell cortex. The protein localises to the apical cell membrane. It localises to the basolateral cell membrane. Plays a crucial role in regulating the dynamics and assembly of the actin cytoskeleton. Recruited to the cell cortex by interaction with ILK which allows it to cooperate with its effector DIAPH1 to locally stabilize microtubules and allow stable insertion of caveolae into the plasma membrane. Binds to activated CDC42 but does not stimulate its GTPase activity. Associates with calmodulin. May promote neurite outgrowth. May play a possible role in cell cycle regulation by contributing to cell cycle progression after DNA replication arrest. In Mus musculus (Mouse), this protein is Ras GTPase-activating-like protein IQGAP1 (Iqgap1).